The following is a 242-amino-acid chain: 3-dehydroquinate dehydratase (242 aa).

Residues 39–41 (EIR) and Arg73 each bind 3-dehydroquinate. His135 serves as the catalytic Proton donor/acceptor. Catalysis depends on Lys162, which acts as the Schiff-base intermediate with substrate. 3-dehydroquinate-binding residues include Arg203 and Gln228.

Belongs to the type-I 3-dehydroquinase family. Homodimer.

The catalysed reaction is 3-dehydroquinate = 3-dehydroshikimate + H2O. It participates in metabolic intermediate biosynthesis; chorismate biosynthesis; chorismate from D-erythrose 4-phosphate and phosphoenolpyruvate: step 3/7. Involved in the third step of the chorismate pathway, which leads to the biosynthesis of aromatic amino acids. Catalyzes the cis-dehydration of 3-dehydroquinate (DHQ) and introduces the first double bond of the aromatic ring to yield 3-dehydroshikimate. The polypeptide is 3-dehydroquinate dehydratase (Methanosarcina mazei (strain ATCC BAA-159 / DSM 3647 / Goe1 / Go1 / JCM 11833 / OCM 88) (Methanosarcina frisia)).